A 244-amino-acid polypeptide reads, in one-letter code: Claudin-12 (244 aa).

Over 1 to 10 (MGCRDVHAAT) the chain is Cytoplasmic. A helical transmembrane segment spans residues 11–31 (VLSFLCGIASVAGLFAGTLLP). The Extracellular portion of the chain corresponds to 32–87 (NWRKLRLITFNRNEKNLTVYTGLWVKCARYDGGNDCLMYDAAWYSSVDQLDLRVLQ). The chain crosses the membrane as a helical span at residues 88–108 (FALPLSILIAMGALLLCLIGM). Topologically, residues 109-135 (CNTAFRSSVPNIKLAKCLVNSAGCHLV) are cytoplasmic. A helical membrane pass occupies residues 136–156 (AGLLFFLAGTVSLSPSIWVIF). Over 157 to 174 (YNIHLNRKFEPVFAFDYA) the chain is Extracellular. The helical transmembrane segment at 175 to 195 (VYVTVASAGGLFMTALLLFIW) threads the bilayer. At 196-244 (YCACKSLPSPFWQPLYSHPPGMHTYSQPYSARSRLSAIEIDIPVVSHTT) the chain is on the cytoplasmic side. Residues Ser-228 and Ser-231 each carry the phosphoserine modification.

Belongs to the claudin family. As to quaternary structure, interacts with OCLN.

It is found in the cell junction. The protein resides in the tight junction. It localises to the cell membrane. Plays a major role in tight junction-specific obliteration of the intercellular space, through calcium-independent cell-adhesion activity. This is Claudin-12 (CLDN12) from Bos taurus (Bovine).